The chain runs to 500 residues: Protein nucleotidyltransferase YdiU (500 aa).

ATP-binding residues include Gly-96, Gly-98, Arg-99, Lys-119, Asp-131, Gly-132, Arg-182, and Arg-189. Catalysis depends on Asp-258, which acts as the Proton acceptor. Mg(2+) contacts are provided by Asn-259 and Asp-268. Asp-268 provides a ligand contact to ATP.

This sequence belongs to the SELO family. The cofactor is Mg(2+). Mn(2+) serves as cofactor.

The catalysed reaction is L-seryl-[protein] + ATP = 3-O-(5'-adenylyl)-L-seryl-[protein] + diphosphate. The enzyme catalyses L-threonyl-[protein] + ATP = 3-O-(5'-adenylyl)-L-threonyl-[protein] + diphosphate. It carries out the reaction L-tyrosyl-[protein] + ATP = O-(5'-adenylyl)-L-tyrosyl-[protein] + diphosphate. It catalyses the reaction L-histidyl-[protein] + UTP = N(tele)-(5'-uridylyl)-L-histidyl-[protein] + diphosphate. The catalysed reaction is L-seryl-[protein] + UTP = O-(5'-uridylyl)-L-seryl-[protein] + diphosphate. The enzyme catalyses L-tyrosyl-[protein] + UTP = O-(5'-uridylyl)-L-tyrosyl-[protein] + diphosphate. Nucleotidyltransferase involved in the post-translational modification of proteins. It can catalyze the addition of adenosine monophosphate (AMP) or uridine monophosphate (UMP) to a protein, resulting in modifications known as AMPylation and UMPylation. This is Protein nucleotidyltransferase YdiU from Rhizobium etli (strain ATCC 51251 / DSM 11541 / JCM 21823 / NBRC 15573 / CFN 42).